Consider the following 261-residue polypeptide: Small ribosomal subunit protein uS3 (261 aa).

The 69-residue stretch at 39-107 folds into the KH type-2 domain; sequence VREYLKRKLA…PVHVSIEEIR (69 aa). Residues 213–261 form a disordered region; it reads QPVAEEPAADDRRPRRTPGRPDGDKPRTRTVKKVDGAADPAKRVRKAGA. A compositionally biased stretch (basic and acidic residues) spans 221 to 254; it reads ADDRRPRRTPGRPDGDKPRTRTVKKVDGAADPAK.

The protein belongs to the universal ribosomal protein uS3 family. As to quaternary structure, part of the 30S ribosomal subunit. Forms a tight complex with proteins S10 and S14.

In terms of biological role, binds the lower part of the 30S subunit head. Binds mRNA in the 70S ribosome, positioning it for translation. The sequence is that of Small ribosomal subunit protein uS3 from Dechloromonas aromatica (strain RCB).